A 421-amino-acid polypeptide reads, in one-letter code: ATP-dependent RNA helicase RhlB (421 aa).

A Q motif motif is present at residues Gln-9 to Ala-37. A Helicase ATP-binding domain is found at Leu-40 to Val-219. Ala-53–Thr-60 is a binding site for ATP. The DEAD box motif lies at Asp-165 to Asp-168. The 146-residue stretch at Arg-245 to Met-390 folds into the Helicase C-terminal domain. A disordered region spans residues Pro-396–Gly-421. A compositionally biased stretch (low complexity) spans Arg-403–Pro-414.

Belongs to the DEAD box helicase family. RhlB subfamily. In terms of assembly, component of the RNA degradosome, which is a multiprotein complex involved in RNA processing and mRNA degradation.

It is found in the cytoplasm. It carries out the reaction ATP + H2O = ADP + phosphate + H(+). In terms of biological role, DEAD-box RNA helicase involved in RNA degradation. Has RNA-dependent ATPase activity and unwinds double-stranded RNA. The protein is ATP-dependent RNA helicase RhlB of Klebsiella pneumoniae subsp. pneumoniae (strain ATCC 700721 / MGH 78578).